Here is a 503-residue protein sequence, read N- to C-terminus: Probable cytosol aminopeptidase (503 aa).

Mn(2+) contacts are provided by Lys-268 and Asp-273. The active site involves Lys-280. 3 residues coordinate Mn(2+): Asp-291, Asp-350, and Glu-352. Arg-354 is an active-site residue.

It belongs to the peptidase M17 family. The cofactor is Mn(2+).

The protein resides in the cytoplasm. The catalysed reaction is Release of an N-terminal amino acid, Xaa-|-Yaa-, in which Xaa is preferably Leu, but may be other amino acids including Pro although not Arg or Lys, and Yaa may be Pro. Amino acid amides and methyl esters are also readily hydrolyzed, but rates on arylamides are exceedingly low.. It catalyses the reaction Release of an N-terminal amino acid, preferentially leucine, but not glutamic or aspartic acids.. Functionally, presumably involved in the processing and regular turnover of intracellular proteins. Catalyzes the removal of unsubstituted N-terminal amino acids from various peptides. The chain is Probable cytosol aminopeptidase from Corynebacterium efficiens (strain DSM 44549 / YS-314 / AJ 12310 / JCM 11189 / NBRC 100395).